The chain runs to 265 residues: UPF0354 protein ABC2771 (265 aa).

Belongs to the UPF0354 family.

The polypeptide is UPF0354 protein ABC2771 (Shouchella clausii (strain KSM-K16) (Alkalihalobacillus clausii)).